Consider the following 120-residue polypeptide: Ribosome-binding factor A (120 aa).

This sequence belongs to the RbfA family. Monomer. Binds 30S ribosomal subunits, but not 50S ribosomal subunits or 70S ribosomes.

Its subcellular location is the cytoplasm. In terms of biological role, one of several proteins that assist in the late maturation steps of the functional core of the 30S ribosomal subunit. Associates with free 30S ribosomal subunits (but not with 30S subunits that are part of 70S ribosomes or polysomes). Required for efficient processing of 16S rRNA. May interact with the 5'-terminal helix region of 16S rRNA. This Clostridium botulinum (strain Loch Maree / Type A3) protein is Ribosome-binding factor A.